We begin with the raw amino-acid sequence, 110 residues long: Replication initiation control protein YabA (110 aa).

Residues His84, Cys86, Cys100, and Cys103 each coordinate Zn(2+).

It belongs to the YabA family. Homotetramer. Interacts with both DnaA and DnaN, acting as a bridge between these two proteins. Zn(2+) serves as cofactor.

It localises to the cytoplasm. Its subcellular location is the nucleoid. Involved in control of chromosome replication initiation. Inhibits the cooperative binding of DnaA to the oriC region, thus negatively regulating initiation of chromosome replication. Inhibits the ability of DnaA-ATP to form a helix on DNA; does not disassemble preformed DnaA-DNA helices. Decreases the residence time of DnaA on the chromosome at its binding sites (oriC, replication forks and promoter-binding sites). Tethers DnaA to the replication machinery via the DNA polymerase beta sliding clamp subunit (dnaN). Associates with oriC and other DnaA targets on the chromosome in a DnaA-dependent manner. This Streptococcus mutans serotype c (strain ATCC 700610 / UA159) protein is Replication initiation control protein YabA.